The sequence spans 309 residues: Golgi to ER traffic protein 4 homolog (309 aa).

The tract at residues 290–309 is disordered; it reads SGGGLASMEVDGPTIEDEMD.

It belongs to the GET4 family.

May play a role in insertion of tail-anchored proteins into the endoplasmic reticulum membrane. This is Golgi to ER traffic protein 4 homolog from Dictyostelium discoideum (Social amoeba).